A 547-amino-acid chain; its full sequence is Delta-guaiene synthase 2 (547 aa).

3 residues coordinate Mg(2+): D299, D303, and D444. The DDXXD motif signature appears at 299–303; sequence DDTYD.

This sequence belongs to the terpene synthase family. The cofactor is Mg(2+).

It catalyses the reaction (2E,6E)-farnesyl diphosphate = delta-guaiene + diphosphate. It carries out the reaction (2E,6E)-farnesyl diphosphate = alpha-guaiene + diphosphate. Its pathway is secondary metabolite biosynthesis; terpenoid biosynthesis. Sesquiterpene synthase involved in the biosynthesis of delta-guaiene (53.7%) and alpha-guaiene (44.6%), two structures composed of five- and seven-membered rings. Also produces 1.7% of alpha-humulene. The chain is Delta-guaiene synthase 2 (C3) from Aquilaria crassna (Eagle wood).